The primary structure comprises 86 residues: Cell division topological specificity factor (86 aa).

Belongs to the MinE family.

Prevents the cell division inhibition by proteins MinC and MinD at internal division sites while permitting inhibition at polar sites. This ensures cell division at the proper site by restricting the formation of a division septum at the midpoint of the long axis of the cell. The chain is Cell division topological specificity factor from Photobacterium profundum (strain SS9).